A 259-amino-acid polypeptide reads, in one-letter code: Global transcriptional regulator CodY (259 aa).

Residues 1-155 (MNLLEKTRQL…SATVVGMEIL (155 aa)) are GAF domain. Residues 203–222 (ASKIADRVGITRSVIVNALR) constitute a DNA-binding region (H-T-H motif).

It belongs to the CodY family.

The protein resides in the cytoplasm. DNA-binding global transcriptional regulator which is involved in the adaptive response to starvation and acts by directly or indirectly controlling the expression of numerous genes in response to nutrient availability. During rapid exponential growth, CodY is highly active and represses genes whose products allow adaptation to nutrient depletion. This Exiguobacterium sp. (strain ATCC BAA-1283 / AT1b) protein is Global transcriptional regulator CodY.